Consider the following 299-residue polypeptide: Rhodanese-like/PpiC domain-containing protein 12, chloroplastic (299 aa).

The transit peptide at 1-81 (MFRVTGTLSA…SGFPALKMRA (81 aa)) directs the protein to the chloroplast. At Ser-82 the chain carries N-acetylserine. In terms of domain architecture, PpiC spans 93–183 (SREILVQHLL…FGLHLLQVLS (91 aa)). The 93-residue stretch at 205–297 (FMDEAQLIDV…YSLKVDPSIP (93 aa)) folds into the Rhodanese domain. Cys-257 serves as the catalytic Cysteine persulfide intermediate.

It is found in the plastid. The protein resides in the chloroplast. The chain is Rhodanese-like/PpiC domain-containing protein 12, chloroplastic from Arabidopsis thaliana (Mouse-ear cress).